A 249-amino-acid polypeptide reads, in one-letter code: 2-C-methyl-D-erythritol 4-phosphate cytidylyltransferase (249 aa).

This sequence belongs to the IspD/TarI cytidylyltransferase family. IspD subfamily.

It carries out the reaction 2-C-methyl-D-erythritol 4-phosphate + CTP + H(+) = 4-CDP-2-C-methyl-D-erythritol + diphosphate. Its pathway is isoprenoid biosynthesis; isopentenyl diphosphate biosynthesis via DXP pathway; isopentenyl diphosphate from 1-deoxy-D-xylulose 5-phosphate: step 2/6. Its function is as follows. Catalyzes the formation of 4-diphosphocytidyl-2-C-methyl-D-erythritol from CTP and 2-C-methyl-D-erythritol 4-phosphate (MEP). The chain is 2-C-methyl-D-erythritol 4-phosphate cytidylyltransferase from Thermobifida fusca (strain YX).